The sequence spans 302 residues: Elongation factor Ts (302 aa).

The segment at 82-85 is involved in Mg(2+) ion dislocation from EF-Tu; it reads TDFV.

Belongs to the EF-Ts family.

Its subcellular location is the cytoplasm. In terms of biological role, associates with the EF-Tu.GDP complex and induces the exchange of GDP to GTP. It remains bound to the aminoacyl-tRNA.EF-Tu.GTP complex up to the GTP hydrolysis stage on the ribosome. The sequence is that of Elongation factor Ts from Nitrosospira multiformis (strain ATCC 25196 / NCIMB 11849 / C 71).